Reading from the N-terminus, the 259-residue chain is MMQKQNMIVVNQKEIAKNIYELVLQGDLVQQMNDPGQFVHIKVAEGITPLLRRPISICNVDQDKNEFTMLYRAEGQGTKTLAKRKQGELVDVLGPLGHGFPVEEAESGQTALLVGGGIGVPPLYELSQRLVAKGVRVIHILGFQTKDVVFYEEKFAELGDTYVATVDGTHGTKGFVTDVIDSYGIDFDILYSCGPLAMLRALEGRYKERKAYISLEERMGCGIGACFACVCHLQADPSGHSYKKVCSDGPVFPIGEVVL.

Positions 2 to 102 (MQKQNMIVVN…LGPLGHGFPV (101 aa)) constitute an FAD-binding FR-type domain. FAD is bound by residues 53–56 (RPIS), 70–72 (LYR), and 77–78 (GT). Residues cysteine 221, cysteine 226, cysteine 229, and cysteine 246 each contribute to the [2Fe-2S] cluster site.

It belongs to the PyrK family. As to quaternary structure, heterotetramer of 2 PyrK and 2 PyrD type B subunits. The cofactor is [2Fe-2S] cluster. It depends on FAD as a cofactor.

Its pathway is pyrimidine metabolism; UMP biosynthesis via de novo pathway; orotate from (S)-dihydroorotate (NAD(+) route): step 1/1. Responsible for channeling the electrons from the oxidation of dihydroorotate from the FMN redox center in the PyrD type B subunit to the ultimate electron acceptor NAD(+). The polypeptide is Dihydroorotate dehydrogenase B (NAD(+)), electron transfer subunit (Bacillus mycoides (strain KBAB4) (Bacillus weihenstephanensis)).